The following is a 129-amino-acid chain: UPF0212 protein Mbar_A2902 (129 aa).

Belongs to the UPF0212 family.

The polypeptide is UPF0212 protein Mbar_A2902 (Methanosarcina barkeri (strain Fusaro / DSM 804)).